A 133-amino-acid chain; its full sequence is Small ribosomal subunit protein uS8 (133 aa).

The protein belongs to the universal ribosomal protein uS8 family. As to quaternary structure, part of the 30S ribosomal subunit. Contacts proteins S5 and S12.

In terms of biological role, one of the primary rRNA binding proteins, it binds directly to 16S rRNA central domain where it helps coordinate assembly of the platform of the 30S subunit. In Prochlorococcus marinus subsp. pastoris (strain CCMP1986 / NIES-2087 / MED4), this protein is Small ribosomal subunit protein uS8.